Here is a 289-residue protein sequence, read N- to C-terminus: Phosphatidylserine decarboxylase proenzyme (289 aa).

Active-site charge relay system; for autoendoproteolytic cleavage activity residues include aspartate 88, histidine 145, and serine 251. Catalysis depends on serine 251, which acts as the Schiff-base intermediate with substrate; via pyruvic acid; for decarboxylase activity. Serine 251 bears the Pyruvic acid (Ser); by autocatalysis mark.

It belongs to the phosphatidylserine decarboxylase family. PSD-B subfamily. Prokaryotic type I sub-subfamily. In terms of assembly, heterodimer of a large membrane-associated beta subunit and a small pyruvoyl-containing alpha subunit. The cofactor is pyruvate. In terms of processing, is synthesized initially as an inactive proenzyme. Formation of the active enzyme involves a self-maturation process in which the active site pyruvoyl group is generated from an internal serine residue via an autocatalytic post-translational modification. Two non-identical subunits are generated from the proenzyme in this reaction, and the pyruvate is formed at the N-terminus of the alpha chain, which is derived from the carboxyl end of the proenzyme. The autoendoproteolytic cleavage occurs by a canonical serine protease mechanism, in which the side chain hydroxyl group of the serine supplies its oxygen atom to form the C-terminus of the beta chain, while the remainder of the serine residue undergoes an oxidative deamination to produce ammonia and the pyruvoyl prosthetic group on the alpha chain. During this reaction, the Ser that is part of the protease active site of the proenzyme becomes the pyruvoyl prosthetic group, which constitutes an essential element of the active site of the mature decarboxylase.

It localises to the cell membrane. The enzyme catalyses a 1,2-diacyl-sn-glycero-3-phospho-L-serine + H(+) = a 1,2-diacyl-sn-glycero-3-phosphoethanolamine + CO2. The protein operates within phospholipid metabolism; phosphatidylethanolamine biosynthesis; phosphatidylethanolamine from CDP-diacylglycerol: step 2/2. Functionally, catalyzes the formation of phosphatidylethanolamine (PtdEtn) from phosphatidylserine (PtdSer). The chain is Phosphatidylserine decarboxylase proenzyme from Polaromonas naphthalenivorans (strain CJ2).